Reading from the N-terminus, the 191-residue chain is Glycerol-3-phosphate acyltransferase (191 aa).

A run of 5 helical transmembrane segments spans residues Ile5–Ile25, Leu51–Gln71, Asp78–Leu98, Ile114–Ile134, and Ser153–Leu173.

The protein belongs to the PlsY family. Probably interacts with PlsX.

The protein localises to the cell membrane. The catalysed reaction is an acyl phosphate + sn-glycerol 3-phosphate = a 1-acyl-sn-glycero-3-phosphate + phosphate. Its pathway is lipid metabolism; phospholipid metabolism. Functionally, catalyzes the transfer of an acyl group from acyl-phosphate (acyl-PO(4)) to glycerol-3-phosphate (G3P) to form lysophosphatidic acid (LPA). This enzyme utilizes acyl-phosphate as fatty acyl donor, but not acyl-CoA or acyl-ACP. This is Glycerol-3-phosphate acyltransferase from Wolbachia pipientis subsp. Culex pipiens (strain wPip).